Here is a 287-residue protein sequence, read N- to C-terminus: Large ribosomal subunit protein uL2 (287 aa).

2 disordered regions span residues 1 to 30 (MGIR…DQPE) and 211 to 287 (NRWK…GRQS). Polar residues predominate over residues 12 to 22 (GTRQKSVSDFS). 2 stretches are compositionally biased toward basic residues: residues 211–220 (NRWKGRRPKV) and 258–287 (KTRK…GRQS).

This sequence belongs to the universal ribosomal protein uL2 family. In terms of assembly, part of the 50S ribosomal subunit. Forms a bridge to the 30S subunit in the 70S ribosome.

Functionally, one of the primary rRNA binding proteins. Required for association of the 30S and 50S subunits to form the 70S ribosome, for tRNA binding and peptide bond formation. It has been suggested to have peptidyltransferase activity; this is somewhat controversial. Makes several contacts with the 16S rRNA in the 70S ribosome. This Cyanothece sp. (strain PCC 7425 / ATCC 29141) protein is Large ribosomal subunit protein uL2.